We begin with the raw amino-acid sequence, 216 residues long: Cytochrome c biogenesis ATP-binding export protein CcmA (216 aa).

One can recognise an ABC transporter domain in the interval 11–216; the sequence is LSANELTCIR…RKITLDYRFV (206 aa). 43 to 50 serves as a coordination point for ATP; sequence GPNGAGKT.

It belongs to the ABC transporter superfamily. CcmA exporter (TC 3.A.1.107) family. In terms of assembly, the complex is composed of two ATP-binding proteins (CcmA) and two transmembrane proteins (CcmB).

The protein resides in the cell inner membrane. The enzyme catalyses heme b(in) + ATP + H2O = heme b(out) + ADP + phosphate + H(+). Part of the ABC transporter complex CcmAB involved in the biogenesis of c-type cytochromes; once thought to export heme, this seems not to be the case, but its exact role is uncertain. Responsible for energy coupling to the transport system. The chain is Cytochrome c biogenesis ATP-binding export protein CcmA from Shewanella frigidimarina (strain NCIMB 400).